A 157-amino-acid polypeptide reads, in one-letter code: uncharacterized protein (157 aa).

The first 23 residues, 1 to 23 (MEALRRAHEATLRLLLCRPWASG), serve as a signal peptide directing secretion.

The protein localises to the secreted. This is an uncharacterized protein from Mus musculus (Mouse).